A 239-amino-acid polypeptide reads, in one-letter code: Orotidine 5'-phosphate decarboxylase (239 aa).

Substrate contacts are provided by residues D11, K33, 60 to 69, T123, R185, Q194, G214, and R215; that span reads DLKCHDIPTT. The active-site Proton donor is K62.

It belongs to the OMP decarboxylase family. Type 1 subfamily. In terms of assembly, homodimer.

The enzyme catalyses orotidine 5'-phosphate + H(+) = UMP + CO2. Its pathway is pyrimidine metabolism; UMP biosynthesis via de novo pathway; UMP from orotate: step 2/2. Functionally, catalyzes the decarboxylation of orotidine 5'-monophosphate (OMP) to uridine 5'-monophosphate (UMP). This chain is Orotidine 5'-phosphate decarboxylase, found in Bacillus licheniformis (strain ATCC 14580 / DSM 13 / JCM 2505 / CCUG 7422 / NBRC 12200 / NCIMB 9375 / NCTC 10341 / NRRL NRS-1264 / Gibson 46).